Reading from the N-terminus, the 481-residue chain is Glycogen synthase (481 aa).

K15 is an ADP-alpha-D-glucose binding site.

The protein belongs to the glycosyltransferase 1 family. Bacterial/plant glycogen synthase subfamily.

It catalyses the reaction [(1-&gt;4)-alpha-D-glucosyl](n) + ADP-alpha-D-glucose = [(1-&gt;4)-alpha-D-glucosyl](n+1) + ADP + H(+). It participates in glycan biosynthesis; glycogen biosynthesis. Functionally, synthesizes alpha-1,4-glucan chains using ADP-glucose. This is Glycogen synthase from Mesorhizobium japonicum (strain LMG 29417 / CECT 9101 / MAFF 303099) (Mesorhizobium loti (strain MAFF 303099)).